Consider the following 139-residue polypeptide: Transcription factor E (139 aa).

An HTH TFE/IIEalpha-type domain is found at 7 to 91; it reads IINKKQDEVS…DYEKILDTLL (85 aa).

This sequence belongs to the TFE family. As to quaternary structure, monomer. Interaction with RNA polymerase subunits RpoF and RpoE is necessary for Tfe stimulatory transcription activity. Able to interact with Tbp and RNA polymerase in the absence of DNA promoter. Interacts both with the preinitiation and elongation complexes.

In terms of biological role, transcription factor that plays a role in the activation of archaeal genes transcribed by RNA polymerase. Facilitates transcription initiation by enhancing TATA-box recognition by TATA-box-binding protein (Tbp), and transcription factor B (Tfb) and RNA polymerase recruitment. Not absolutely required for transcription in vitro, but particularly important in cases where Tbp or Tfb function is not optimal. It dynamically alters the nucleic acid-binding properties of RNA polymerases by stabilizing the initiation complex and destabilizing elongation complexes. Seems to translocate with the RNA polymerase following initiation and acts by binding to the non template strand of the transcription bubble in elongation complexes. This is Transcription factor E from Nanoarchaeum equitans (strain Kin4-M).